The following is a 425-amino-acid chain: Interferon regulatory factor 8 (425 aa).

The IRF tryptophan pentad repeat DNA-binding region spans 7–114 (GRRLRQWLIE…EPYKVYRIVP (108 aa)).

This sequence belongs to the IRF family.

Its subcellular location is the nucleus. It is found in the cytoplasm. Its function is as follows. Plays a role as a transcriptional activator or repressor. Specifically binds to the upstream regulatory region of type I IFN and IFN-inducible MHC class I genes (the interferon consensus sequence (ICS)). Plays a regulatory role in cells of the immune system. The polypeptide is Interferon regulatory factor 8 (IRF8) (Gallus gallus (Chicken)).